We begin with the raw amino-acid sequence, 144 residues long: Putative pre-16S rRNA nuclease (144 aa).

It belongs to the YqgF nuclease family.

The protein localises to the cytoplasm. Its function is as follows. Could be a nuclease involved in processing of the 5'-end of pre-16S rRNA. This is Putative pre-16S rRNA nuclease from Pseudomonas paraeruginosa (strain DSM 24068 / PA7) (Pseudomonas aeruginosa (strain PA7)).